Consider the following 334-residue polypeptide: GTP 3',8-cyclase (334 aa).

Residues 13 to 239 form the Radical SAM core domain; that stretch reads KFHRKFYYLR…KVRSHHDGPA (227 aa). A GTP-binding site is contributed by arginine 22. Positions 29 and 33 each coordinate [4Fe-4S] cluster. Residue tyrosine 35 participates in S-adenosyl-L-methionine binding. Cysteine 36 lines the [4Fe-4S] cluster pocket. Arginine 73 provides a ligand contact to GTP. Glycine 77 lines the S-adenosyl-L-methionine pocket. Residue threonine 104 coordinates GTP. Serine 128 is a binding site for S-adenosyl-L-methionine. A GTP-binding site is contributed by lysine 165. Methionine 199 provides a ligand contact to S-adenosyl-L-methionine. Cysteine 262 and cysteine 265 together coordinate [4Fe-4S] cluster. GTP is bound at residue 267–269; that stretch reads RLR. A [4Fe-4S] cluster-binding site is contributed by cysteine 279.

It belongs to the radical SAM superfamily. MoaA family. In terms of assembly, monomer and homodimer. Requires [4Fe-4S] cluster as cofactor.

It carries out the reaction GTP + AH2 + S-adenosyl-L-methionine = (8S)-3',8-cyclo-7,8-dihydroguanosine 5'-triphosphate + 5'-deoxyadenosine + L-methionine + A + H(+). The protein operates within cofactor biosynthesis; molybdopterin biosynthesis. Functionally, catalyzes the cyclization of GTP to (8S)-3',8-cyclo-7,8-dihydroguanosine 5'-triphosphate. The chain is GTP 3',8-cyclase from Vibrio parahaemolyticus serotype O3:K6 (strain RIMD 2210633).